Here is a 255-residue protein sequence, read N- to C-terminus: Putative cysteine-rich repeat secretory protein 27 (255 aa).

Residues 1–26 (MISKFGSVHILAVVAIQLLIIPSVSS) form the signal peptide. 2 consecutive Gnk2-homologous domains span residues 33-135 (YLHH…TINS) and 141-252 (YEND…LYPF).

This sequence belongs to the cysteine-rich repeat secretory protein family.

The protein localises to the secreted. The chain is Putative cysteine-rich repeat secretory protein 27 (CRRSP27) from Arabidopsis thaliana (Mouse-ear cress).